We begin with the raw amino-acid sequence, 709 residues long: Nucleobase-ascorbate transporter 12 (709 aa).

The disordered stretch occupies residues Met-1–Gly-145. Residues Lys-7 to Pro-19 show a composition bias toward pro residues. Ser-40 is subject to Phosphoserine. Residues Gly-41–Leu-53 show a composition bias toward polar residues. 2 stretches are compositionally biased toward basic and acidic residues: residues Glu-89–Pro-98 and Gln-113–Asp-122. The next 12 membrane-spanning stretches (helical) occupy residues Tyr-190–Gly-210, Val-218–Ser-238, Leu-240–Ser-260, Ile-283–Leu-303, Pro-308–Pro-328, Leu-329–Leu-349, Ile-361–Leu-381, Trp-438–Ala-458, Gly-530–Ile-550, Pro-551–Leu-571, Ile-585–Tyr-605, and Tyr-639–Leu-659.

The protein belongs to the nucleobase:cation symporter-2 (NCS2) (TC 2.A.40) family. Ubiquitous.

Its subcellular location is the cell membrane. This is Nucleobase-ascorbate transporter 12 (NAT12) from Arabidopsis thaliana (Mouse-ear cress).